The chain runs to 449 residues: Type 3 secretion system ATPase (449 aa).

178 to 183 serves as a coordination point for ATP; sequence GCGKTT.

Belongs to the ATPase alpha/beta chains family. T3SS ATPase subfamily. In terms of assembly, the core secretion machinery of the T3SS is composed of approximately 20 different proteins, including cytoplasmic components, a base, an export apparatus and a needle. This subunit is part of the cytosolic complex. Forms homododecamers.

The protein resides in the cytoplasm. It catalyses the reaction ATP + H2O + cellular proteinSide 1 = ADP + phosphate + cellular proteinSide 2.. Functionally, ATPase component of the type III secretion system (T3SS), also called injectisome, which is used to inject bacterial effector proteins into eukaryotic host cells. Acts as a molecular motor to provide the energy that is required for the export of proteins. Required for type III secretion apparatus (T3SA) formation, proper protein secretion, host cell invasion and virulence. May play a critical role in T3SS substrate recognition, disassembly of the effector/chaperone complex and unfolding of the effector in an ATP-dependent manner prior to secretion. The polypeptide is Type 3 secretion system ATPase (Pseudomonas syringae pv. syringae).